Consider the following 125-residue polypeptide: Fumarate reductase subunit D (125 aa).

Transmembrane regions (helical) follow at residues phenylalanine 30–isoleucine 50, alanine 62–tryptophan 82, and valine 105–isoleucine 125.

Belongs to the FrdD family. As to quaternary structure, part of an enzyme complex containing four subunits: a flavoprotein (FrdA), an iron-sulfur protein (FrdB), and two hydrophobic anchor proteins (FrdC and FrdD).

It localises to the cell inner membrane. Its function is as follows. Anchors the catalytic components of the fumarate reductase complex to the cell membrane, binds quinones. The protein is Fumarate reductase subunit D of Vibrio parahaemolyticus serotype O3:K6 (strain RIMD 2210633).